A 311-amino-acid chain; its full sequence is Bifunctional protein FolD (311 aa).

Position 174 to 176 (174 to 176 (GKG)) interacts with NADP(+).

The protein belongs to the tetrahydrofolate dehydrogenase/cyclohydrolase family. In terms of assembly, homodimer.

It carries out the reaction (6R)-5,10-methylene-5,6,7,8-tetrahydrofolate + NADP(+) = (6R)-5,10-methenyltetrahydrofolate + NADPH. The enzyme catalyses (6R)-5,10-methenyltetrahydrofolate + H2O = (6R)-10-formyltetrahydrofolate + H(+). Its pathway is one-carbon metabolism; tetrahydrofolate interconversion. Catalyzes the oxidation of 5,10-methylenetetrahydrofolate to 5,10-methenyltetrahydrofolate and then the hydrolysis of 5,10-methenyltetrahydrofolate to 10-formyltetrahydrofolate. The sequence is that of Bifunctional protein FolD from Pyrobaculum aerophilum (strain ATCC 51768 / DSM 7523 / JCM 9630 / CIP 104966 / NBRC 100827 / IM2).